The chain runs to 164 residues: UPF0262 protein Saro_0143 (164 aa).

It belongs to the UPF0262 family.

The polypeptide is UPF0262 protein Saro_0143 (Novosphingobium aromaticivorans (strain ATCC 700278 / DSM 12444 / CCUG 56034 / CIP 105152 / NBRC 16084 / F199)).